The chain runs to 121 residues: Immunoglobulin heavy variable 6-1 (121 aa).

The first 20 residues, M1 to S20, serve as a signal peptide directing secretion. The framework-1 stretch occupies residues Q21–S45. The Ig-like domain occupies Q21 to R121. The cysteines at positions 42 and 119 are disulfide-linked. Residues G46 to A55 form a complementarity-determining-1 region. Positions W56–R72 are framework-2. The interval T73 to N81 is complementarity-determining-2. Residues D82 to C119 form a framework-3 region. The interval A120–R121 is complementarity-determining-3.

Immunoglobulins are composed of two identical heavy chains and two identical light chains; disulfide-linked.

The protein localises to the secreted. The protein resides in the cell membrane. V region of the variable domain of immunoglobulin heavy chains that participates in the antigen recognition. Immunoglobulins, also known as antibodies, are membrane-bound or secreted glycoproteins produced by B lymphocytes. In the recognition phase of humoral immunity, the membrane-bound immunoglobulins serve as receptors which, upon binding of a specific antigen, trigger the clonal expansion and differentiation of B lymphocytes into immunoglobulins-secreting plasma cells. Secreted immunoglobulins mediate the effector phase of humoral immunity, which results in the elimination of bound antigens. The antigen binding site is formed by the variable domain of one heavy chain, together with that of its associated light chain. Thus, each immunoglobulin has two antigen binding sites with remarkable affinity for a particular antigen. The variable domains are assembled by a process called V-(D)-J rearrangement and can then be subjected to somatic hypermutations which, after exposure to antigen and selection, allow affinity maturation for a particular antigen. The polypeptide is Immunoglobulin heavy variable 6-1 (Homo sapiens (Human)).